Reading from the N-terminus, the 190-residue chain is Ribonuclease HII (190 aa).

The region spanning 3-190 (KLIAGVDEVG…KPVKALLEEK (188 aa)) is the RNase H type-2 domain. A divalent metal cation contacts are provided by Asp-9, Glu-10, and Asp-101.

The protein belongs to the RNase HII family. It depends on Mn(2+) as a cofactor. Mg(2+) serves as cofactor.

It localises to the cytoplasm. It carries out the reaction Endonucleolytic cleavage to 5'-phosphomonoester.. In terms of biological role, endonuclease that specifically degrades the RNA of RNA-DNA hybrids. In Alteromonas mediterranea (strain DSM 17117 / CIP 110805 / LMG 28347 / Deep ecotype), this protein is Ribonuclease HII.